A 123-amino-acid polypeptide reads, in one-letter code: Integration host factor subunit alpha (123 aa).

Positions 97-123 (NANGSAPSMSSSASAVDDDKSESASRT) are disordered. A compositionally biased stretch (low complexity) spans 98–111 (ANGSAPSMSSSASA). Residues 113–123 (DDDKSESASRT) are compositionally biased toward basic and acidic residues.

Belongs to the bacterial histone-like protein family. In terms of assembly, heterodimer of an alpha and a beta chain.

Functionally, this protein is one of the two subunits of integration host factor, a specific DNA-binding protein that functions in genetic recombination as well as in transcriptional and translational control. The sequence is that of Integration host factor subunit alpha from Rhodopseudomonas palustris (strain BisB5).